Here is a 266-residue protein sequence, read N- to C-terminus: Pyridoxal phosphate phosphatase YigL (266 aa).

Asp-8 acts as the Nucleophile in catalysis. Asp-8 lines the Mg(2+) pocket. Phosphate is bound at residue Leu-9. Asp-10 is a Mg(2+) binding site. Phosphate is bound by residues 42–43 (TG) and Lys-191. Mg(2+) is bound at residue Asp-214. Asn-217 is a phosphate binding site.

It belongs to the HAD-like hydrolase superfamily. Cof family. It depends on Mg(2+) as a cofactor. Mn(2+) serves as cofactor. The cofactor is Co(2+). Zn(2+) is required as a cofactor.

The enzyme catalyses pyridoxal 5'-phosphate + H2O = pyridoxal + phosphate. It carries out the reaction sugar phosphate + H2O = sugar + phosphate.. Its function is as follows. Catalyzes Strongly the dephosphorylation of pyridoxal-phosphate (PLP) and moderately the dephosphorylation of 2-deoxyglucose 6-phosphate (2bGLU6P) and beta-glucose 6-phosphate (bGlu6P). Also hydrolyzes both purines (GMP and IMP) and pyrimidines as secondary substrates. The protein is Pyridoxal phosphate phosphatase YigL (yigL) of Escherichia coli (strain K12).